A 228-amino-acid chain; its full sequence is Cytochrome c oxidase subunit 2 (228 aa).

Residues 1-26 (MSTWANLGLQDSASPLMEQLIFFHDH) lie on the Mitochondrial intermembrane side of the membrane. A helical membrane pass occupies residues 27 to 48 (ALLILVMITVLVGYLMFMLFFN). The Mitochondrial matrix portion of the chain corresponds to 49–62 (NYVNRFLLHGQLIE). A helical transmembrane segment spans residues 63–82 (MIWTILPAIILLFIALPSLR). Residues 83 to 228 (LLYLLDEINE…FIKWISSNNS (146 aa)) are Mitochondrial intermembrane-facing. Residues histidine 161, cysteine 196, glutamate 198, cysteine 200, histidine 204, and methionine 207 each contribute to the Cu cation site. Position 198 (glutamate 198) interacts with Mg(2+).

It belongs to the cytochrome c oxidase subunit 2 family. Component of the cytochrome c oxidase (complex IV, CIV), a multisubunit enzyme composed of a catalytic core of 3 subunits and several supernumerary subunits. The complex exists as a monomer or a dimer and forms supercomplexes (SCs) in the inner mitochondrial membrane with ubiquinol-cytochrome c oxidoreductase (cytochrome b-c1 complex, complex III, CIII). The cofactor is Cu cation.

It localises to the mitochondrion inner membrane. It carries out the reaction 4 Fe(II)-[cytochrome c] + O2 + 8 H(+)(in) = 4 Fe(III)-[cytochrome c] + 2 H2O + 4 H(+)(out). Component of the cytochrome c oxidase, the last enzyme in the mitochondrial electron transport chain which drives oxidative phosphorylation. The respiratory chain contains 3 multisubunit complexes succinate dehydrogenase (complex II, CII), ubiquinol-cytochrome c oxidoreductase (cytochrome b-c1 complex, complex III, CIII) and cytochrome c oxidase (complex IV, CIV), that cooperate to transfer electrons derived from NADH and succinate to molecular oxygen, creating an electrochemical gradient over the inner membrane that drives transmembrane transport and the ATP synthase. Cytochrome c oxidase is the component of the respiratory chain that catalyzes the reduction of oxygen to water. Electrons originating from reduced cytochrome c in the intermembrane space (IMS) are transferred via the dinuclear copper A center (CU(A)) of subunit 2 and heme A of subunit 1 to the active site in subunit 1, a binuclear center (BNC) formed by heme A3 and copper B (CU(B)). The BNC reduces molecular oxygen to 2 water molecules using 4 electrons from cytochrome c in the IMS and 4 protons from the mitochondrial matrix. This Drosophila simulans (Fruit fly) protein is Cytochrome c oxidase subunit 2 (mt:CoII).